The primary structure comprises 772 residues: Bromo adjacent homology domain-containing 1 protein (772 aa).

Disordered stretches follow at residues 1–63 and 77–117; these read MTHT…RSLV and LENV…PRKR. The residue at position 8 (S8) is a Phosphoserine. Over residues 49-61 the composition is skewed to basic residues; it reads TGRRKNYPLRKRS. 2 positions are modified to phosphoserine: S101 and S121. Disordered stretches follow at residues 131-357, 521-582, and 723-743; these read LLER…PADY, QTVA…RTNG, and PSRK…PHRT. Basic and acidic residues-rich tracts occupy residues 147-158, 170-182, and 189-199; these read RGGDPHRSRDRA, RLGD…RDLS, and EGARRDGDPAP. Phosphoserine is present on S182. S204 carries the phosphoserine modification. A compositionally biased stretch (pro residues) spans 280–289; that stretch reads SAPPHGPPTQ. Residues 299–310 show a composition bias toward low complexity; it reads LENPLRPNLPLL. Residues 340 to 352 show a composition bias toward pro residues; that stretch reads FPAPQLSPLPMPG. Polar residues predominate over residues 536–548; it reads GSKSGLRTGSSCR. A compositionally biased stretch (basic residues) spans 549-580; it reads HTVRSKAARRPSHPKQPRAQRPRPRRRRRRRT. T580 carries the phosphothreonine modification. The BAH domain maps to 616–771; it reads ETIRVRDTVL…FRHGRILKNP (156 aa).

In terms of assembly, interacts with CBX5 (HP1 alpha), HDAC5, MBD1 and SP1. Ubiquitinated in a FBXO11-dependent manner; leading to degradation.

It localises to the nucleus. Its subcellular location is the chromosome. Its function is as follows. Heterochromatin protein that acts as a transcription repressor and has the ability to promote the formation of large heterochromatic domains. May act by recruiting heterochromatin proteins such as CBX5 (HP1 alpha), HDAC5 and MBD1. Represses IGF2 expression by binding to its CpG-rich P3 promoter and recruiting heterochromatin proteins. This chain is Bromo adjacent homology domain-containing 1 protein (Bahd1), found in Mus musculus (Mouse).